The sequence spans 155 residues: Fibroblast growth factor 2 (155 aa).

The propeptide occupies 1–9 (MAAGSITTL). Residues 1–11 (MAAGSITTLPT) are compositionally biased toward polar residues. The interval 1–24 (MAAGSITTLPTESEDGGNTPFSPG) is disordered. Residues 27–31 (KDPKR) and 116–119 (RSRK) contribute to the heparin site.

The protein belongs to the heparin-binding growth factors family.

The protein resides in the secreted. The protein localises to the nucleus. Its function is as follows. Acts as a ligand for FGFR1, FGFR2, FGFR3 and FGFR4. Also acts as an integrin ligand which is required for FGF2 signaling. Plays an important role in the regulation of cell survival, cell division, cell differentiation and cell migration. Functions as a potent mitogen in vitro. Can induce angiogenesis. In Xenopus laevis (African clawed frog), this protein is Fibroblast growth factor 2 (fgf2).